The primary structure comprises 313 residues: Porphobilinogen deaminase (313 aa).

Cys242 carries the S-(dipyrrolylmethanemethyl)cysteine modification.

Belongs to the HMBS family. As to quaternary structure, monomer. Dipyrromethane serves as cofactor.

It carries out the reaction 4 porphobilinogen + H2O = hydroxymethylbilane + 4 NH4(+). It functions in the pathway porphyrin-containing compound metabolism; protoporphyrin-IX biosynthesis; coproporphyrinogen-III from 5-aminolevulinate: step 2/4. Tetrapolymerization of the monopyrrole PBG into the hydroxymethylbilane pre-uroporphyrinogen in several discrete steps. The chain is Porphobilinogen deaminase from Pseudomonas syringae pv. tomato (strain ATCC BAA-871 / DC3000).